The sequence spans 427 residues: ATP synthase subunit beta (427 aa).

160–167 (GGAGVGKT) contributes to the ATP binding site.

It belongs to the ATPase alpha/beta chains family. F-type ATPases have 2 components, CF(1) - the catalytic core - and CF(0) - the membrane proton channel. CF(1) has five subunits: alpha(3), beta(3), gamma(1), delta(1), epsilon(1). CF(0) has three main subunits: a(1), b(2) and c(9-12). The alpha and beta chains form an alternating ring which encloses part of the gamma chain. CF(1) is attached to CF(0) by a central stalk formed by the gamma and epsilon chains, while a peripheral stalk is formed by the delta and b chains.

The protein localises to the cell membrane. The catalysed reaction is ATP + H2O + 4 H(+)(in) = ADP + phosphate + 5 H(+)(out). Functionally, produces ATP from ADP in the presence of a proton gradient across the membrane. The catalytic sites are hosted primarily by the beta subunits. The sequence is that of ATP synthase subunit beta from Peptococcus niger.